The following is a 428-amino-acid chain: Dihydroorotase (428 aa).

Positions 59 and 61 each coordinate Zn(2+). Substrate contacts are provided by residues 61–63 (HLR) and Asn-93. Zn(2+)-binding residues include Asp-151, His-178, and His-231. A substrate-binding site is contributed by Asn-277. A Zn(2+)-binding site is contributed by Asp-304. Asp-304 is an active-site residue. Substrate contacts are provided by residues His-308 and 322–323 (FG).

The protein belongs to the metallo-dependent hydrolases superfamily. DHOase family. Class I DHOase subfamily. Zn(2+) is required as a cofactor.

It carries out the reaction (S)-dihydroorotate + H2O = N-carbamoyl-L-aspartate + H(+). It functions in the pathway pyrimidine metabolism; UMP biosynthesis via de novo pathway; (S)-dihydroorotate from bicarbonate: step 3/3. Catalyzes the reversible cyclization of carbamoyl aspartate to dihydroorotate. The protein is Dihydroorotase of Bacillus cereus (strain B4264).